The chain runs to 341 residues: Mytilin-2 (341 aa).

The first 24 residues, 1–24 (MFKQSYQLCLVFLLFVCFYQSVKG), serve as a signal peptide directing secretion.

In terms of tissue distribution, component of the organic matrix of calcified shell layers like nacre and prisms.

It localises to the secreted. This chain is Mytilin-2, found in Mytilus californianus (California mussel).